Here is a 259-residue protein sequence, read N- to C-terminus: Ribosomal RNA small subunit methyltransferase A (259 aa).

S-adenosyl-L-methionine contacts are provided by N13, L15, G40, E61, D85, and N103.

The protein belongs to the class I-like SAM-binding methyltransferase superfamily. rRNA adenine N(6)-methyltransferase family. RsmA subfamily.

The protein localises to the cytoplasm. The catalysed reaction is adenosine(1518)/adenosine(1519) in 16S rRNA + 4 S-adenosyl-L-methionine = N(6)-dimethyladenosine(1518)/N(6)-dimethyladenosine(1519) in 16S rRNA + 4 S-adenosyl-L-homocysteine + 4 H(+). Its function is as follows. Specifically dimethylates two adjacent adenosines (A1518 and A1519) in the loop of a conserved hairpin near the 3'-end of 16S rRNA in the 30S particle. May play a critical role in biogenesis of 30S subunits. This is Ribosomal RNA small subunit methyltransferase A from Neisseria meningitidis serogroup C / serotype 2a (strain ATCC 700532 / DSM 15464 / FAM18).